The following is a 517-amino-acid chain: Tyrosine-protein kinase Fgr (517 aa).

The N-myristoyl glycine moiety is linked to residue G2. S-palmitoyl cysteine attachment occurs at residues C3 and C6. Residues 17–33 are compositionally biased toward basic and acidic residues; that stretch reads VGLEGDFRSQGAEERYY. A disordered region spans residues 17-46; the sequence is VGLEGDFRSQGAEERYYPDPTQGRSSSISP. Y32 bears the Phosphotyrosine mark. S50 carries the phosphoserine modification. The SH3 domain maps to 65–126; it reads TGVTIFVALY…PSNYVAPVDS (62 aa). Positions 132-229 constitute an SH2 domain; sequence WYFGKISRKD…GLCYLLTAPC (98 aa). Y196 bears the Phosphotyrosine mark. S206 carries the phosphoserine modification. The region spanning 251 to 504 is the Protein kinase domain; it reads IALDRRLGTG…YLQSFLEDYF (254 aa). Residues 257-265 and K279 contribute to the ATP site; that span reads LGTGCFGDV. D370 (proton acceptor) is an active-site residue. At Y400 the chain carries Phosphotyrosine; by autocatalysis. A Phosphotyrosine; by SRC modification is found at Y511.

Belongs to the protein kinase superfamily. Tyr protein kinase family. SRC subfamily. In terms of assembly, interacts with ITGB1, ITGB2, MS4A2/FCER1B and FCGR2. Interacts (via SH2 domain) with SYK (tyrosine phosphorylated). Interacts (via SH2 domain) with FLT3 (tyrosine phosphorylated). Interacts with PTK2/FAK1. Interacts (via SH2 domain) with HCLS1 (tyrosine phosphorylated by SYK). Interacts with SIRPA and PTPNS1. Interacts (not phosphorylated on tyrosine residues) with CBL; FGR tyrosine phosphorylation promotes dissociation. Interacts with CLNK. Ubiquitinated. Becomes ubiquitinated in response to ITGB2 signaling; this does not lead to degradation. Post-translationally, phosphorylated. Autophosphorylated on tyrosine residues. Becomes phosphorylated in response to FCGR2 engagement, cell adhesion and signaling by ITGB2. Prior phosphorylation at Tyr-511 by SRC inhibits ulterior autophosphorylation at Tyr-400. As to expression, detected in brain cortex (at protein level).

The protein resides in the cell membrane. The protein localises to the cell projection. It is found in the ruffle membrane. Its subcellular location is the cytoplasm. It localises to the cytosol. The protein resides in the cytoskeleton. The protein localises to the mitochondrion inner membrane. It is found in the mitochondrion intermembrane space. It catalyses the reaction L-tyrosyl-[protein] + ATP = O-phospho-L-tyrosyl-[protein] + ADP + H(+). With respect to regulation, activated by autophosphorylation. Prior phosphorylation at Tyr-511 by SRC inhibits ulterior autophosphorylation at Tyr-400. Activated by phorbol myristate acetate, phosphatidic acid and poly-Lys. Binding (via SH2 domain) of HCLS1 that is already phosphorylated by SYK strongly increases kinase activity. Functionally, non-receptor tyrosine-protein kinase that transmits signals from cell surface receptors devoid of kinase activity and contributes to the regulation of immune responses, including neutrophil, monocyte, macrophage and mast cell functions, cytoskeleton remodeling in response to extracellular stimuli, phagocytosis, cell adhesion and migration. Promotes mast cell degranulation, release of inflammatory cytokines and IgE-mediated anaphylaxis. Acts downstream of receptors that bind the Fc region of immunoglobulins, such as MS4A2/FCER1B, FCER1G and FCGR2. Acts downstream of ITGB1 and ITGB2, and regulates actin cytoskeleton reorganization, cell spreading and adhesion. Depending on the context, activates or inhibits cellular responses. Functions as a negative regulator of ITGB2 signaling, phagocytosis and SYK activity in monocytes. Required for normal ITGB1 and ITGB2 signaling, normal cell spreading and adhesion in neutrophils and macrophages. Functions as a positive regulator of cell migration and regulates cytoskeleton reorganization via RAC1 activation. Phosphorylates SYK (in vitro) and promotes SYK-dependent activation of AKT1 and MAP kinase signaling. Phosphorylates PLD2 in antigen-stimulated mast cells, leading to PLD2 activation and the production of the signaling molecules lysophosphatidic acid and diacylglycerol. Promotes activation of PIK3R1. Phosphorylates FASLG, and thereby regulates its ubiquitination and subsequent internalization. Phosphorylates ABL1. Promotes phosphorylation of CBL, CTTN, PIK3R1, PTK2/FAK1, PTK2B/PYK2 and VAV2. Phosphorylates HCLS1 that has already been phosphorylated by SYK, but not unphosphorylated HCLS1. Together with CLNK, it acts as a negative regulator of natural killer cell-activating receptors and inhibits interferon-gamma production. This chain is Tyrosine-protein kinase Fgr (Fgr), found in Rattus norvegicus (Rat).